Consider the following 286-residue polypeptide: Diaminopimelate epimerase (286 aa).

Substrate contacts are provided by Asn-22, Gln-56, and Asn-76. The active-site Proton donor is the Cys-85. Substrate is bound by residues 86-87 (GN), Asn-169, Asn-202, and 220-221 (ER). Cys-229 (proton acceptor) is an active-site residue. 230 to 231 (GS) contacts substrate.

The protein belongs to the diaminopimelate epimerase family. In terms of assembly, homodimer.

It localises to the cytoplasm. It carries out the reaction (2S,6S)-2,6-diaminopimelate = meso-2,6-diaminopimelate. It participates in amino-acid biosynthesis; L-lysine biosynthesis via DAP pathway; DL-2,6-diaminopimelate from LL-2,6-diaminopimelate: step 1/1. Functionally, catalyzes the stereoinversion of LL-2,6-diaminopimelate (L,L-DAP) to meso-diaminopimelate (meso-DAP), a precursor of L-lysine and an essential component of the bacterial peptidoglycan. The protein is Diaminopimelate epimerase of Buchnera aphidicola subsp. Baizongia pistaciae (strain Bp).